Reading from the N-terminus, the 83-residue chain is Small ribosomal subunit protein bS16 (83 aa).

The protein belongs to the bacterial ribosomal protein bS16 family.

The sequence is that of Small ribosomal subunit protein bS16 from Pseudomonas putida (strain W619).